The sequence spans 1237 residues: Structural protein VP1 (1237 aa).

One can recognise a PPPDE domain in the interval 1006–1222 (EPLRTLLFKL…ENDVRIAMIH (217 aa)). Catalysis depends on residues His1040 and Cys1192.

It is found in the virion. This chain is Structural protein VP1, found in Rice ragged stunt virus (isolate Thailand) (RRSV).